The primary structure comprises 200 residues: MLLPYLNKDLIEAGCDEAGRGCLAGSVYAAAVILPKDFKNELLNDSKQLTEKQRYALREVIEKEALAWAVGVVSPEEIDEINILRASFLAMHRAVDQLSVRPQHLLIDGNRFNKYPDIPHTTVIKGDGKYLSIAAASILAKTYRDDYMNRLHEEYPFYDWNKNKGYPTKKHRAAIAEHGTTPYHRMTFNLLGDGQLNLNF.

Positions leucine 10–phenylalanine 200 constitute an RNase H type-2 domain. The a divalent metal cation site is built by aspartate 16, glutamate 17, and aspartate 108.

This sequence belongs to the RNase HII family. Requires Mn(2+) as cofactor. The cofactor is Mg(2+).

It localises to the cytoplasm. It catalyses the reaction Endonucleolytic cleavage to 5'-phosphomonoester.. Endonuclease that specifically degrades the RNA of RNA-DNA hybrids. This Bacteroides thetaiotaomicron (strain ATCC 29148 / DSM 2079 / JCM 5827 / CCUG 10774 / NCTC 10582 / VPI-5482 / E50) protein is Ribonuclease HII.